Here is a 1006-residue protein sequence, read N- to C-terminus: SGGFDFSFLPQPPQEKAGVGLGPGPMGLMGPRGPPGASGAPGPQGFQGPAGEPGEPGQTGPAGARGVVGPQGARGFPGTPGLPGFKGIRGYNGLDGLKGQPGAAGVKGEPGAPGENGTPGQTGARGLPGERGRVGAPGPAGSRGSDGSVGPVGPAGPIGSAGPPGFPGAPGPKGELGPVGNTGPSGPAGPRGEQGLPGVSGPVGPPGNPGANGLTGAKGAAGLPGVAGAPGLPGPRGIPGPVGASGATGARGLVGEPGPAGSKGESGGKGEPGSAGPQGPPGSSGEEGKRGPSGESGSTGPTGPPGLRGGPGSRGLPGADGRAGVIGPAGARGASGPAGVRGPSGDTGRPGEPGLMGARGLPGSPGNVGPAGKEGPAGLPGIDGRPGPIGPAGARGEAGNIGFPGPKGPAGDPGKGGEKGHAGLAGNRGAPGPDGNNGAQGPPGLQGVQGGKGEQGPAGPPGFQGLPGPAGTTGEAGKPGERGIPGEFGLPGPAGPRGERGPPGESGAVGPSGAIGSRGPSGPPGPDGNKGEPGVVGAPGTAGPAGSGGLPGERGAAGIPGGKGEKGETGLRGEVGTTGRGAPGAVGAPGPAGATGDRGEAGAAGPAGPAGPRGSPGERGEVGPAGPNGFAGPAGAAGQPGAKGERGTKGPKGENGIVGPTGPVGSAGPAGPNGPAGPAGSRGDGGPPGVTGFPGAAGRTGPPGPSGITGPPGPPGAAGKEGLRGPRGDQGPVGRTGETGAGGPPGFTGEKGPSGEPGTAGPPGTAGPQGLLGAPGILGLPGSRGERGLPGVAGAVGEPGPLGIGPPGARGGRDGNPGSDGPPGRDGLPGHKGERGYAGNPGPVGAAGAPGPHGAVGPAGKHGNRGEPGPVGSAGPVGALGPRGPSGPQGIRGDKGEAGDKGPRGLPGLKGHNGLQGLPGLAGQHGDQGAPGAVGPAGPRGPSGPSGPPGKDGRTGHPGAVGPAGIRGSQGSQGPSGPPGPPGPPGPPGASGGGYDFGYEGDFYRA.

The disordered stretch occupies residues 1–84 (SGGFDFSFLP…GFPGTPGLPG (84 aa)). 4 positions are modified to 4-hydroxyproline: proline 10, proline 13, proline 35, and proline 41. Over residues 28–64 (LMGPRGPPGASGAPGPQGFQGPAGEPGEPGQTGPAGA) the composition is skewed to low complexity. At lysine 86 the chain carries 5-hydroxylysine; alternate. An O-linked (Gal...) hydroxylysine; alternate glycan is attached at lysine 86. The disordered stretch occupies residues 99-1006 (GQPGAAGVKG…FGYEGDFYRA (908 aa)). Low complexity-rich tracts occupy residues 142 to 163 (SRGSDGSVGPVGPAGPIGSAGP) and 209 to 230 (PGANGLTGAKGAAGLPGVAGAP). The span at 264-273 (GESGGKGEPG) shows a compositional bias: gly residues. A compositionally biased stretch (low complexity) spans 274 to 284 (SAGPQGPPGSS). Over residues 306 to 315 (GLRGGPGSRG) the composition is skewed to gly residues. Residues 328–344 (PAGARGASGPAGVRGPS) are compositionally biased toward low complexity. Residues proline 350 and proline 353 each carry the 4-hydroxyproline modification. Low complexity predominate over residues 379–398 (LPGIDGRPGPIGPAGARGEA). The span at 447–456 (GVQGGKGEQG) shows a compositional bias: gly residues. Composition is skewed to low complexity over residues 503–520 (PGESGAVGPSGAIGSRGP) and 532–542 (EPGVVGAPGTA). Positions 543 to 552 (GPAGSGGLPG) are enriched in gly residues. Composition is skewed to low complexity over residues 585-615 (AVGAPGPAGATGDRGEAGAAGPAGPAGPRGS) and 622-642 (VGPAGPNGFAGPAGAAGQPGA). The segment covering 643–652 (KGERGTKGPK) has biased composition (basic and acidic residues). A compositionally biased stretch (low complexity) spans 660 to 670 (PTGPVGSAGPA). The segment covering 680 to 689 (GSRGDGGPPG) has biased composition (gly residues). Over residues 691-700 (TGFPGAAGRT) the composition is skewed to low complexity. Positions 737 to 746 (GETGAGGPPG) are enriched in gly residues. Low complexity-rich tracts occupy residues 754 to 781 (SGEPGTAGPPGTAGPQGLLGAPGILGLP) and 789 to 799 (LPGVAGAVGEP). The segment covering 800–810 (GPLGIGPPGAR) has biased composition (gly residues). Positions 837-882 (YAGNPGPVGAAGAPGPHGAVGPAGKHGNRGEPGPVGSAGPVGALGP) are enriched in low complexity. Basic and acidic residues predominate over residues 892 to 903 (RGDKGEAGDKGP). Residues 976–988 (SGPPGPPGPPGPP) are compositionally biased toward pro residues.

It belongs to the fibrillar collagen family. As to quaternary structure, trimers of one alpha 2(I) and two alpha 1(I) chains. Interacts (via C-terminus) with TMEM131 (via PapD-L domain); the interaction is direct and is involved in assembly and TRAPPIII ER-to-Golgi transport complex-dependent secretion of collagen. In terms of processing, prolines at the third position of the tripeptide repeating unit (G-X-Y) are hydroxylated in some or all of the chains. As to expression, expressed in bones.

It is found in the secreted. The protein resides in the extracellular space. It localises to the extracellular matrix. Functionally, type I collagen is a member of group I collagen (fibrillar forming collagen). The protein is Collagen alpha-2(I) chain of Choloepus hoffmanni (Hoffmann's two-fingered sloth).